The following is a 346-amino-acid chain: 4-hydroxy-2-oxovalerate aldolase 2 (346 aa).

In terms of domain architecture, Pyruvate carboxyltransferase spans 8-260 (VTVHDMTLRD…ETGVDVFKIQ (253 aa)). 16–17 (RD) serves as a coordination point for substrate. Aspartate 17 provides a ligand contact to Mn(2+). Catalysis depends on histidine 20, which acts as the Proton acceptor. The substrate site is built by serine 170 and histidine 199. The Mn(2+) site is built by histidine 199 and histidine 201. Substrate is bound at residue tyrosine 290.

This sequence belongs to the 4-hydroxy-2-oxovalerate aldolase family.

The catalysed reaction is (S)-4-hydroxy-2-oxopentanoate = acetaldehyde + pyruvate. In Metapseudomonas furukawaii (Pseudomonas furukawaii), this protein is 4-hydroxy-2-oxovalerate aldolase 2 (bphX3).